Reading from the N-terminus, the 131-residue chain is Aspartate 1-decarboxylase (131 aa).

The active-site Schiff-base intermediate with substrate; via pyruvic acid is the serine 25. Serine 25 carries the post-translational modification Pyruvic acid (Ser). Substrate is bound at residue threonine 57. Tyrosine 58 acts as the Proton donor in catalysis. Position 73–75 (73–75) interacts with substrate; it reads GAA.

The protein belongs to the PanD family. In terms of assembly, heterooctamer of four alpha and four beta subunits. Pyruvate is required as a cofactor. Post-translationally, is synthesized initially as an inactive proenzyme, which is activated by self-cleavage at a specific serine bond to produce a beta-subunit with a hydroxyl group at its C-terminus and an alpha-subunit with a pyruvoyl group at its N-terminus.

It is found in the cytoplasm. It carries out the reaction L-aspartate + H(+) = beta-alanine + CO2. The protein operates within cofactor biosynthesis; (R)-pantothenate biosynthesis; beta-alanine from L-aspartate: step 1/1. Its function is as follows. Catalyzes the pyruvoyl-dependent decarboxylation of aspartate to produce beta-alanine. The sequence is that of Aspartate 1-decarboxylase from Anaeromyxobacter sp. (strain K).